The chain runs to 496 residues: Glycogen synthase (496 aa).

Position 24 (lysine 24) interacts with ADP-alpha-D-glucose.

This sequence belongs to the glycosyltransferase 1 family. Bacterial/plant glycogen synthase subfamily.

The enzyme catalyses [(1-&gt;4)-alpha-D-glucosyl](n) + ADP-alpha-D-glucose = [(1-&gt;4)-alpha-D-glucosyl](n+1) + ADP + H(+). Its pathway is glycan biosynthesis; glycogen biosynthesis. Synthesizes alpha-1,4-glucan chains using ADP-glucose. In Nitrosospira multiformis (strain ATCC 25196 / NCIMB 11849 / C 71), this protein is Glycogen synthase.